We begin with the raw amino-acid sequence, 312 residues long: tRNA dimethylallyltransferase (312 aa).

10 to 17 (GPTASGKS) serves as a coordination point for ATP. Position 12 to 17 (12 to 17 (TASGKS)) interacts with substrate. The tract at residues 35–38 (DSKQ) is interaction with substrate tRNA.

Belongs to the IPP transferase family. Monomer. It depends on Mg(2+) as a cofactor.

The enzyme catalyses adenosine(37) in tRNA + dimethylallyl diphosphate = N(6)-dimethylallyladenosine(37) in tRNA + diphosphate. In terms of biological role, catalyzes the transfer of a dimethylallyl group onto the adenine at position 37 in tRNAs that read codons beginning with uridine, leading to the formation of N6-(dimethylallyl)adenosine (i(6)A). This chain is tRNA dimethylallyltransferase, found in Anaplasma phagocytophilum (strain HZ).